Reading from the N-terminus, the 822-residue chain is Sushi domain-containing protein 2 (822 aa).

The signal sequence occupies residues 1–27 (MKPALLPWALLLLATALGPGPGPTADA). One can recognise an SMB domain in the interval 28–66 (QESCSMRCGALDGPCSCHPTCSGLGTCCLDFRDFCLEIL). Residues 28–785 (QESCSMRCGA…PKCQPGRSYA (758 aa)) are Extracellular-facing. 7 disulfide bridges follow: cysteine 31-cysteine 35, cysteine 31-cysteine 44, cysteine 35-cysteine 62, cysteine 42-cysteine 44, cysteine 42-cysteine 55, cysteine 48-cysteine 54, and cysteine 55-cysteine 62. Asparagine 162 and asparagine 177 each carry an N-linked (GlcNAc...) asparagine glycan. Residues 285–433 (PVAWARTQCQ…PDCPRYMQRR (149 aa)) form the AMOP domain. The VWFD domain occupies 445 to 639 (RLASAFGDPH…NWTVHNASSL (195 aa)). Asparagine 522 carries N-linked (GlcNAc...) asparagine glycosylation. The region spanning 723–780 (VSCGWLAPPPNGQKEGNRYLAGSTIYFHCDNGYSLAGAETSTCQADGTWSSPTPKCQP) is the Sushi domain. Disulfide bonds link cysteine 725–cysteine 765 and cysteine 751–cysteine 778. Residues 786 to 806 (VLLGIIFGGLAVVAAVALVYV) traverse the membrane as a helical segment. At 807-822 (LLRRRKGNTHVWGAQP) the chain is on the cytoplasmic side.

As to quaternary structure, interacts with LGALS1; leads to an increased amount of LGALS1 on the cell surface. Interacts with GPR15LG; the interaction is direct. Highly expressed in breast cancer, but shows a restricted expression pattern in normal tissues such as adipose, adrenal gland, kidney, lung, mammary gland, placenta, thyroid, trachea, and uterus. Also expressed in colon; down-regulated in colon cancer tissues.

Its subcellular location is the cell membrane. Its function is as follows. May be a cytokine receptor for GPR15LG. May be a tumor suppressor; together with GPR15LG has a growth inhibitory effect on colon cancer cells which includes G1 cell cycle arrest. May play a role in breast tumorigenesis. The chain is Sushi domain-containing protein 2 (SUSD2) from Homo sapiens (Human).